The following is a 208-amino-acid chain: MEWSPVAKVYDPLKAGSIDGTDVEPHDAGVWRAMLARYKPNRGVCGDPDLTLFVARLNPQTTEEKLRDVFSKFGDIRRLRLVRDVVTGFSKRYAFIEYKEERSLKRAWRDANKLILDQYELLVDVEQERTLPGWRPRRLGGGQGGQKESGQLRFGGRDRPFRKPINLSTRRPAEPRGRETERERDRRDYRDRRHERTHTEDRTHRHTY.

Positions 50 to 128 (LTLFVARLNP…YELLVDVEQE (79 aa)) constitute an RRM domain. The disordered stretch occupies residues 133-208 (GWRPRRLGGG…TEDRTHRHTY (76 aa)). The segment covering 171 to 208 (RPAEPRGRETERERDRRDYRDRRHERTHTEDRTHRHTY) has biased composition (basic and acidic residues).

The protein resides in the nucleus. The sequence is that of U11/U12 small nuclear ribonucleoprotein 35 kDa protein (snrnp35) from Danio rerio (Zebrafish).